A 78-amino-acid chain; its full sequence is Beta-defensin 105A (78 aa).

The signal sequence occupies residues 1–27 (MALIRKTFYFVFAVFFILVQQPSGCQA). Cystine bridges form between cysteine 43/cysteine 74, cysteine 53/cysteine 67, and cysteine 57/cysteine 73.

Belongs to the beta-defensin family.

It localises to the secreted. Has antimicrobial activity. This is Beta-defensin 105A (DEFB105A) from Macaca fascicularis (Crab-eating macaque).